The chain runs to 539 residues: Protein peanut (539 aa).

A phosphoserine mark is found at serine 6 and serine 13. The disordered stretch occupies residues 29–90 (LRDKQQAASA…GASNGDSNKL (62 aa)). The segment covering 35-54 (AASASASSATNGSSGSESLV) has biased composition (low complexity). A Septin-type G domain is found at 139–411 (RGFEFTLMVV…ENYRCRKLSE (273 aa)). The segment at 149 to 156 (GASGLGKS) is G1 motif. Residues 149–156 (GASGLGKS), threonine 183, glycine 209, 288–296 (KADTMTPDE), glycine 345, and arginine 360 each bind GTP. The tract at residues 206 to 209 (DTPG) is G3 motif. Residues 287–290 (AKAD) form a G4 motif region. The stretch at 420 to 516 (RLSNKNPLTQ…HVTLEELKRR (97 aa)) forms a coiled coil. The tract at residues 513 to 539 (LKRRSLGANSSTDNVDGKKEKKKKGLF) is disordered. Position 517 is a phosphoserine (serine 517).

The protein belongs to the TRAFAC class TrmE-Era-EngA-EngB-Septin-like GTPase superfamily. Septin GTPase family. In terms of assembly, likely part of a multicomponent septin complex that includes Septin1. Interacts with Septin1. Interacts with hil. Interacts with park. Ubiquitinated by park, leading to its degradation by the proteasome. Accumulates at the leading edge of the cleavage furrow in dividing cells and cellularizing embryos (at protein level).

It localises to the apical cell membrane. The protein localises to the cleavage furrow. It is found in the cytoplasm. The protein resides in the cell cortex. Involved in cytokinesis and possibly cellularization. Also acts as an enhancer of the sina gene, thus having a role in photoreceptor development. May be involved in p53-dependent apoptosis. In Drosophila melanogaster (Fruit fly), this protein is Protein peanut (pnut).